A 397-amino-acid polypeptide reads, in one-letter code: S-adenosylmethionine synthase (397 aa).

Residue histidine 15 participates in ATP binding. Aspartate 17 lines the Mg(2+) pocket. Glutamate 43 is a K(+) binding site. L-methionine contacts are provided by glutamate 56 and glutamine 99. The interval 99 to 109 (QSPDIAMGVNK) is flexible loop. ATP-binding positions include 175-177 (DGK), 241-242 (RF), aspartate 250, 256-257 (RK), alanine 273, and lysine 277. Residue aspartate 250 coordinates L-methionine. Lysine 281 contributes to the L-methionine binding site.

This sequence belongs to the AdoMet synthase family. In terms of assembly, homotetramer; dimer of dimers. Mg(2+) serves as cofactor. K(+) is required as a cofactor.

It is found in the cytoplasm. The catalysed reaction is L-methionine + ATP + H2O = S-adenosyl-L-methionine + phosphate + diphosphate. Its pathway is amino-acid biosynthesis; S-adenosyl-L-methionine biosynthesis; S-adenosyl-L-methionine from L-methionine: step 1/1. Functionally, catalyzes the formation of S-adenosylmethionine (AdoMet) from methionine and ATP. The overall synthetic reaction is composed of two sequential steps, AdoMet formation and the subsequent tripolyphosphate hydrolysis which occurs prior to release of AdoMet from the enzyme. This is S-adenosylmethionine synthase from Acetivibrio thermocellus (strain ATCC 27405 / DSM 1237 / JCM 9322 / NBRC 103400 / NCIMB 10682 / NRRL B-4536 / VPI 7372) (Clostridium thermocellum).